The sequence spans 118 residues: Large ribosomal subunit protein uL18 (118 aa).

Belongs to the universal ribosomal protein uL18 family. Part of the 50S ribosomal subunit; part of the 5S rRNA/L5/L18/L25 subcomplex. Contacts the 5S and 23S rRNAs.

Its function is as follows. This is one of the proteins that bind and probably mediate the attachment of the 5S RNA into the large ribosomal subunit, where it forms part of the central protuberance. This Helicobacter pylori (strain P12) protein is Large ribosomal subunit protein uL18.